Here is a 103-residue protein sequence, read N- to C-terminus: Large ribosomal subunit protein bL21 (103 aa).

It belongs to the bacterial ribosomal protein bL21 family. In terms of assembly, part of the 50S ribosomal subunit. Contacts protein L20.

Its function is as follows. This protein binds to 23S rRNA in the presence of protein L20. In Leptothrix cholodnii (strain ATCC 51168 / LMG 8142 / SP-6) (Leptothrix discophora (strain SP-6)), this protein is Large ribosomal subunit protein bL21.